Here is a 634-residue protein sequence, read N- to C-terminus: Probable potassium transport system protein Kup (634 aa).

12 helical membrane passes run 19–39, 62–82, 113–133, 150–170, 177–197, 225–245, 259–279, 291–311, 349–369, 379–399, 406–426, and 431–451; these read AIGL…TSPL, VLSL…VIFV, FVVV…MITP, GLEH…FLIQ, IGIL…ALGV, IGVA…ALYA, WFLL…ATIL, LLAP…ATVI, IYIG…VLGF, YGVA…VVIW, LWLG…FFAA, and VIQG…LMST.

This sequence belongs to the HAK/KUP transporter (TC 2.A.72) family.

It localises to the cell inner membrane. It catalyses the reaction K(+)(in) + H(+)(in) = K(+)(out) + H(+)(out). In terms of biological role, transport of potassium into the cell. Likely operates as a K(+):H(+) symporter. This chain is Probable potassium transport system protein Kup, found in Pseudomonas aeruginosa (strain LESB58).